The primary structure comprises 251 residues: Triosephosphate isomerase (251 aa).

10–12 is a substrate binding site; the sequence is NWK. Catalysis depends on H99, which acts as the Electrophile. E167 functions as the Proton acceptor in the catalytic mechanism. Residues G173, S211, and 232–233 each bind substrate; that span reads GG.

Belongs to the triosephosphate isomerase family. In terms of assembly, homodimer.

Its subcellular location is the cytoplasm. The enzyme catalyses D-glyceraldehyde 3-phosphate = dihydroxyacetone phosphate. It functions in the pathway carbohydrate biosynthesis; gluconeogenesis. It participates in carbohydrate degradation; glycolysis; D-glyceraldehyde 3-phosphate from glycerone phosphate: step 1/1. Involved in the gluconeogenesis. Catalyzes stereospecifically the conversion of dihydroxyacetone phosphate (DHAP) to D-glyceraldehyde-3-phosphate (G3P). In Neisseria meningitidis serogroup A / serotype 4A (strain DSM 15465 / Z2491), this protein is Triosephosphate isomerase.